A 164-amino-acid polypeptide reads, in one-letter code: C-phycoerythrin alpha chain (164 aa).

The (2R,3E)-phycoerythrobilin site is built by Cys-82 and Cys-139.

It belongs to the phycobiliprotein family. As to quaternary structure, heterodimer of an alpha and a beta chain. Post-translationally, contains two covalently linked bilin chromophores.

The protein localises to the cellular thylakoid membrane. Light-harvesting photosynthetic bile pigment-protein from the phycobiliprotein complex. This Pseudanabaena tenuis (strain PCC 7409) protein is C-phycoerythrin alpha chain (cpeA).